Consider the following 320-residue polypeptide: Malate dehydrogenase (320 aa).

NAD(+) contacts are provided by residues 10 to 15 (GSGMIG) and aspartate 34. 2 residues coordinate substrate: arginine 83 and arginine 89. NAD(+) is bound by residues asparagine 96 and 119–121 (ITN). Positions 121 and 152 each coordinate substrate. The Proton acceptor role is filled by histidine 176.

This sequence belongs to the LDH/MDH superfamily. MDH type 3 family.

The catalysed reaction is (S)-malate + NAD(+) = oxaloacetate + NADH + H(+). Functionally, catalyzes the reversible oxidation of malate to oxaloacetate. The protein is Malate dehydrogenase of Allorhizobium ampelinum (strain ATCC BAA-846 / DSM 112012 / S4) (Agrobacterium vitis (strain S4)).